The primary structure comprises 715 residues: Polyribonucleotide nucleotidyltransferase (715 aa).

Residues aspartate 493 and aspartate 499 each coordinate Mg(2+). The region spanning 560 to 619 (PRMITVKINPEKIRDVIGKGGSVIRALTEETGTTIDISDDGVVTIASTSSEGMAEAKKRI) is the KH domain. One can recognise an S1 motif domain in the interval 629–697 (GQVYEGTVLK…EKGRVRLSAK (69 aa)).

Belongs to the polyribonucleotide nucleotidyltransferase family. Requires Mg(2+) as cofactor.

Its subcellular location is the cytoplasm. The catalysed reaction is RNA(n+1) + phosphate = RNA(n) + a ribonucleoside 5'-diphosphate. Involved in mRNA degradation. Catalyzes the phosphorolysis of single-stranded polyribonucleotides processively in the 3'- to 5'-direction. This Burkholderia orbicola (strain MC0-3) protein is Polyribonucleotide nucleotidyltransferase.